The chain runs to 193 residues: dITP/XTP pyrophosphatase (193 aa).

7–12 (SENENK) contacts substrate. Catalysis depends on Asp-65, which acts as the Proton acceptor. Mg(2+) is bound at residue Asp-65. Residues Ser-66, 144-147 (FGYD), Lys-167, and 172-173 (HR) contribute to the substrate site.

It belongs to the HAM1 NTPase family. As to quaternary structure, homodimer. Requires Mg(2+) as cofactor.

It catalyses the reaction XTP + H2O = XMP + diphosphate + H(+). The enzyme catalyses dITP + H2O = dIMP + diphosphate + H(+). It carries out the reaction ITP + H2O = IMP + diphosphate + H(+). Its function is as follows. Pyrophosphatase that catalyzes the hydrolysis of nucleoside triphosphates to their monophosphate derivatives, with a high preference for the non-canonical purine nucleotides XTP (xanthosine triphosphate), dITP (deoxyinosine triphosphate) and ITP. Seems to function as a house-cleaning enzyme that removes non-canonical purine nucleotides from the nucleotide pool, thus preventing their incorporation into DNA/RNA and avoiding chromosomal lesions. This chain is dITP/XTP pyrophosphatase, found in Tropheryma whipplei (strain Twist) (Whipple's bacillus).